A 158-amino-acid chain; its full sequence is Deoxyuridine 5'-triphosphate nucleotidohydrolase (158 aa).

Substrate-binding positions include 75–77, N88, 92–94, and K102; these read RSG and TVD.

The protein belongs to the dUTPase family. Mg(2+) is required as a cofactor.

The enzyme catalyses dUTP + H2O = dUMP + diphosphate + H(+). Its pathway is pyrimidine metabolism; dUMP biosynthesis; dUMP from dCTP (dUTP route): step 2/2. This enzyme is involved in nucleotide metabolism: it produces dUMP, the immediate precursor of thymidine nucleotides and it decreases the intracellular concentration of dUTP so that uracil cannot be incorporated into DNA. The sequence is that of Deoxyuridine 5'-triphosphate nucleotidohydrolase from Bifidobacterium longum (strain DJO10A).